The following is a 249-amino-acid chain: uncharacterized protein (249 aa).

The signal sequence occupies residues 1 to 43 (MRRGRSRPAGAAPAALLLPLLLLLPLTGCDRLAAAPAEHAAAA). The disordered stretch occupies residues 40 to 59 (AAAAGDPAQDADRGRRLPPV). Positions 68–243 (PVVFLTYDDG…TIEEQGLRVG (176 aa)) constitute a NodB homology domain.

This is an uncharacterized protein from Streptomyces coelicolor (strain ATCC BAA-471 / A3(2) / M145).